Reading from the N-terminus, the 270-residue chain is ATP synthase subunit a (270 aa).

5 helical membrane-spanning segments follow: residues Ile-40–Val-60, Ile-98–Val-118, Asp-143–Ile-163, Leu-208–Trp-228, and Ala-239–Val-259.

It belongs to the ATPase A chain family. F-type ATPases have 2 components, CF(1) - the catalytic core - and CF(0) - the membrane proton channel. CF(1) has five subunits: alpha(3), beta(3), gamma(1), delta(1), epsilon(1). CF(0) has three main subunits: a(1), b(2) and c(9-12). The alpha and beta chains form an alternating ring which encloses part of the gamma chain. CF(1) is attached to CF(0) by a central stalk formed by the gamma and epsilon chains, while a peripheral stalk is formed by the delta and b chains.

Its subcellular location is the cell inner membrane. Key component of the proton channel; it plays a direct role in the translocation of protons across the membrane. In Vibrio vulnificus (strain CMCP6), this protein is ATP synthase subunit a.